The chain runs to 318 residues: Oxidoreductase swnN (318 aa).

Belongs to the NmrA-type oxidoreductase family. Isoflavone reductase subfamily.

The protein operates within mycotoxin biosynthesis. In terms of biological role, aminotransferase; part of the gene cluster that mediates the biosynthesis of swainsonine (SW), a cytotoxic fungal alkaloid and a potential cancer therapy drug. Swainsonine production occurs via a multibranched pathway and is dispensable for fungal colonization of plants and infection of insect hosts. The first step of swainsonine biosynthesis is the production of the precursor pipecolic acid (PA) via conversion of L-lysine (Lys) to 1-piperideine-6-carboxylate (P6C) by the aminotransferase swnA, the latter being further reduced to PA by the reductase swnR. The PKS-NRPS hybrid synthetase swnK uptakes and condensates PA and malonyl-CoA with and without skipping of the ketoreductase (KR) domain in order to produce 3 intermediates, 1-oxoindolizidine, (1S)-1-hydroxyindolizin, and (1R)-1-hydroxyindolizine; with the transisomer (1S)-1-hydroxyindolizin being predominant. The terminal thioester reductase (TE) domain of swnK is involved in reduction of the thioester bond to release the intermediate aldehydes. The oxidoreductase swnN could contribute to the reduction of 1-oxoindolizidine to (1S)-1-hydroxyindolizin and (1R)-1-hydroxyindolizine, contributing to the major route of SW production. The dioxygenase swnH2 would be responsible for the oxidization of (1R)-1-hydroxyindolizine into (1R,2S)-1,2-dihydroxyindolizine and of (1S)-1-hydroxyindolizin to yield both (1R,2S)-1,2-dihydroxyindolizine and (1S,2S)-1,2-dihydroxyindolizine. The dioxygenase swnH1 then performs the conversion of the 1,2-dihydroxyindolizine epimers to SW. This is Oxidoreductase swnN from Arthroderma benhamiae (strain ATCC MYA-4681 / CBS 112371) (Trichophyton mentagrophytes).